Reading from the N-terminus, the 491-residue chain is Ketol-acid reductoisomerase (NADP(+)) (491 aa).

The 194-residue stretch at 15–208 folds into the KARI N-terminal Rossmann domain; that stretch reads AQLGKCRFMG…GGHRAGVLES (194 aa). Residues 45-48, R68, R76, S78, and 108-110 each bind NADP(+); these read CGAQ and DKQ. The active site involves H132. G158 lines the NADP(+) pocket. KARI C-terminal knotted domains are found at residues 209-344 and 345-484; these read SFVA…TAPQ and YEGK…MTDM. The Mg(2+) site is built by D217, E221, E389, and E393. Position 414 (S414) interacts with substrate.

The protein belongs to the ketol-acid reductoisomerase family. It depends on Mg(2+) as a cofactor.

The enzyme catalyses (2R)-2,3-dihydroxy-3-methylbutanoate + NADP(+) = (2S)-2-acetolactate + NADPH + H(+). The catalysed reaction is (2R,3R)-2,3-dihydroxy-3-methylpentanoate + NADP(+) = (S)-2-ethyl-2-hydroxy-3-oxobutanoate + NADPH + H(+). It participates in amino-acid biosynthesis; L-isoleucine biosynthesis; L-isoleucine from 2-oxobutanoate: step 2/4. Its pathway is amino-acid biosynthesis; L-valine biosynthesis; L-valine from pyruvate: step 2/4. Its function is as follows. Involved in the biosynthesis of branched-chain amino acids (BCAA). Catalyzes an alkyl-migration followed by a ketol-acid reduction of (S)-2-acetolactate (S2AL) to yield (R)-2,3-dihydroxy-isovalerate. In the isomerase reaction, S2AL is rearranged via a Mg-dependent methyl migration to produce 3-hydroxy-3-methyl-2-ketobutyrate (HMKB). In the reductase reaction, this 2-ketoacid undergoes a metal-dependent reduction by NADPH to yield (R)-2,3-dihydroxy-isovalerate. The polypeptide is Ketol-acid reductoisomerase (NADP(+)) (Escherichia coli (strain 55989 / EAEC)).